Reading from the N-terminus, the 70-residue chain is DNA-directed RNA polymerase subunit epsilon (70 aa).

It belongs to the RNA polymerase subunit epsilon family. As to quaternary structure, RNAP is composed of a core of 2 alpha, a beta and a beta' subunit. The core is associated with a delta subunit, and at least one of epsilon or omega. When a sigma factor is associated with the core the holoenzyme is formed, which can initiate transcription.

The catalysed reaction is RNA(n) + a ribonucleoside 5'-triphosphate = RNA(n+1) + diphosphate. Functionally, a non-essential component of RNA polymerase (RNAP). In Bacillus cereus (strain Q1), this protein is DNA-directed RNA polymerase subunit epsilon.